A 500-amino-acid chain; its full sequence is Adenylosuccinate synthetase, chloroplastic (500 aa).

Residues 87–93 and 115–117 contribute to the GTP site; these read GDEGKGK and GHT. Catalysis depends on D88, which acts as the Proton acceptor. Residues D88 and G115 each contribute to the Mg(2+) site. IMP contacts are provided by residues 88 to 91, 113 to 116, T205, R219, Q299, T314, and R378; these read DEGK and NAGH. Residue H116 is the Proton donor of the active site. A substrate-binding site is contributed by 374-380; sequence TTTGRPR. GTP-binding positions include R380, 406-408, and 489-491; these read KLD and GIG.

This sequence belongs to the adenylosuccinate synthetase family. In terms of assembly, homodimer. Requires Mg(2+) as cofactor.

It localises to the plastid. Its subcellular location is the chloroplast. The enzyme catalyses IMP + L-aspartate + GTP = N(6)-(1,2-dicarboxyethyl)-AMP + GDP + phosphate + 2 H(+). It participates in purine metabolism; AMP biosynthesis via de novo pathway; AMP from IMP: step 1/2. Its function is as follows. Plays an important role in the de novo pathway and in the salvage pathway of purine nucleotide biosynthesis. Catalyzes the first committed step in the biosynthesis of AMP from IMP. The protein is Adenylosuccinate synthetase, chloroplastic of Solanum bulbocastanum (Wild potato).